We begin with the raw amino-acid sequence, 120 residues long: Late histone H2A.2.2 (120 aa).

Positions 1–18 are enriched in basic residues; sequence MSGRGKGAKSKSKAKSRS. The disordered stretch occupies residues 1–22; sequence MSGRGKGAKSKSKAKSRSSRAG. N-acetylserine is present on S2. S2 carries the post-translational modification Phosphoserine. Q104 is subject to N5-methylglutamine. Residue K119 forms a Glycyl lysine isopeptide (Lys-Gly) (interchain with G-Cter in ubiquitin) linkage.

This sequence belongs to the histone H2A family. In terms of assembly, the nucleosome is a histone octamer containing two molecules each of H2A, H2B, H3 and H4 assembled in one H3-H4 heterotetramer and two H2A-H2B heterodimers. The octamer wraps approximately 147 bp of DNA. In terms of processing, monoubiquitination of Lys-119 gives a specific tag for epigenetic transcriptional repression. Phosphorylation of Ser-2 directly represses transcription.

The protein resides in the nucleus. It localises to the chromosome. Its function is as follows. Core component of nucleosome. Nucleosomes wrap and compact DNA into chromatin, limiting DNA accessibility to the cellular machineries which require DNA as a template. Histones thereby play a central role in transcription regulation, DNA repair, DNA replication and chromosomal stability. DNA accessibility is regulated via a complex set of post-translational modifications of histones, also called histone code, and nucleosome remodeling. This is Late histone H2A.2.2 from Psammechinus miliaris (Green sea urchin).